A 712-amino-acid chain; its full sequence is Lactoperoxidase (712 aa).

An N-terminal signal peptide occupies residues Met1–Ala21. A propeptide spanning residues Ser22–Leu117 is cleaved from the precursor. Asn106 carries an N-linked (GlcNAc...) (complex) asparagine; alternate glycan. Asn106 carries an N-linked (GlcNAc...) (hybrid) asparagine; alternate glycan. 4 disulfides stabilise this stretch: Cys123/Cys284, Cys132/Cys145, Cys246/Cys256, and Cys250/Cys274. A glycan (N-linked (GlcNAc...) (complex) asparagine; alternate) is linked at Asn212. Asn212 carries N-linked (GlcNAc...) (hybrid) asparagine; alternate glycosylation. Asp225 is a heme b binding site. Catalysis depends on His226, which acts as the Proton acceptor. Asp227 is a binding site for Ca(2+). Positions 301, 303, 305, and 307 each coordinate Ca(2+). Ser315 carries the phosphoserine modification. N-linked (GlcNAc...) (high mannose) asparagine glycosylation occurs at Asn322. Cys354 and Cys365 form a disulfide bridge. The N-linked (GlcNAc...) asparagine glycan is linked to Asn358. Glu375 contacts heme b. Asn449 carries an N-linked (GlcNAc...) (complex) asparagine; alternate glycan. The N-linked (GlcNAc...) (hybrid) asparagine; alternate glycan is linked to Asn449. A glycan (N-linked (GlcNAc...) (high mannose) asparagine; alternate) is linked at Asn449. His468 serves as a coordination point for heme b. Tyr482 is modified (3'-nitrotyrosine). Disulfide bonds link Cys573–Cys630 and Cys671–Cys696.

It belongs to the peroxidase family. XPO subfamily. Requires Ca(2+) as cofactor. The cofactor is heme b. As to expression, mammary gland; milk.

Its subcellular location is the secreted. The protein resides in the cytoplasm. The catalysed reaction is 2 a phenolic donor + H2O2 = 2 a phenolic radical donor + 2 H2O. It carries out the reaction thiocyanate + H2O2 + H(+) = hypothiocyanous acid + H2O. It catalyses the reaction iodide + H2O2 = hypoiodite + H2O. Its activity is regulated as follows. Inhibited by small molecule methimazole (MMZ). In terms of biological role, heme-containing oxidoreductase which catalyzes the conversion of thiocyanate (SCN(-)) into antimicrobial agent hypothiocyanous acid (OSCN(-)) in the presence of hydrogen peroxide (H2O2). Also involved in the conversion of iodide (I(-)) into hypoiodite (IO(-)) in the presence of H2O2. Responsible for the inactivation of a wide range of micro-organisms and hence, important component of defense mechanism. Shows antibacterial properties against several Gram-positive bacteria including some Staphylococcus species and Gram-negative bacteria including E.coli, P.aeruginosa and some Salmonella species. Inhibits the growth of several fungi including A.niger, Trichoderma species, C.cassicola, P.meadii and C.salmonicolor. Does not have anti-fungal activity towards C.albicans and Pythium species. May protect the udder from infection and may promote growth in newborns. May be implicated in airway host defense against infection. May contribute to maintaining an appropriate H2O2 cellular level, therefore protecting cells from H2O2-caused injuries and inflammation. This chain is Lactoperoxidase (LPO), found in Capra hircus (Goat).